The following is a 268-amino-acid chain: UPF0328 protein ECU09_2030 (268 aa).

It belongs to the UPF0328 family.

The sequence is that of UPF0328 protein ECU09_2030 from Encephalitozoon cuniculi (strain GB-M1) (Microsporidian parasite).